The following is a 642-amino-acid chain: Threonine--tRNA ligase (642 aa).

Residues 1–61 enclose the TGS domain; sequence MPVITLPDGS…ENDATLSIIT (61 aa). A catalytic region spans residues 243–534; it reads DHRKIGKQLD…LTEEFAGFFP (292 aa). 3 residues coordinate Zn(2+): cysteine 334, histidine 385, and histidine 511.

It belongs to the class-II aminoacyl-tRNA synthetase family. In terms of assembly, homodimer. Zn(2+) serves as cofactor.

It localises to the cytoplasm. It carries out the reaction tRNA(Thr) + L-threonine + ATP = L-threonyl-tRNA(Thr) + AMP + diphosphate + H(+). In terms of biological role, catalyzes the attachment of threonine to tRNA(Thr) in a two-step reaction: L-threonine is first activated by ATP to form Thr-AMP and then transferred to the acceptor end of tRNA(Thr). Also edits incorrectly charged L-seryl-tRNA(Thr). The polypeptide is Threonine--tRNA ligase (Salmonella agona (strain SL483)).